Reading from the N-terminus, the 779-residue chain is Subtilisin-like protease SBT3.18 (779 aa).

The N-terminal stretch at 1–21 (MYFWVMFFTLMIKVKLYITNG) is a signal peptide. Positions 22-109 (DIFQNRPTVY…VFKSKSLKLH (88 aa)) are cleaved as a propeptide — activation peptide. Positions 30-109 (VYVVYLGANR…VFKSKSLKLH (80 aa)) constitute an Inhibitor I9 domain. Residue Asn-84 is glycosylated (N-linked (GlcNAc...) asparagine). The region spanning 113–621 (SWDFLGLAVD…AGHINPLKAM (509 aa)) is the Peptidase S8 domain. Residues Asp-144 and His-221 each act as charge relay system in the active site. N-linked (GlcNAc...) asparagine glycosylation is found at Asn-236 and Asn-406. Ser-553 functions as the Charge relay system in the catalytic mechanism.

The protein belongs to the peptidase S8 family.

Its subcellular location is the secreted. The polypeptide is Subtilisin-like protease SBT3.18 (Arabidopsis thaliana (Mouse-ear cress)).